The sequence spans 351 residues: Foldase protein PrsA 1 (351 aa).

Positions 1–22 are cleaved as a signal peptide; the sequence is MKNSNKLIASVVTLASVMALAA. Residue Cys-23 is the site of N-palmitoyl cysteine attachment. Residue Cys-23 is the site of S-diacylglycerol cysteine attachment. In terms of domain architecture, PpiC spans 145–240; sequence TPTMAVEMIT…KKFYIVKVTK (96 aa). 2 stretches are compositionally biased toward low complexity: residues 303–317 and 326–351; these read KTKA…SESS and ESEQ…PAAQ. The disordered stretch occupies residues 303 to 351; sequence KTKAASESSTTSESSKAAEENPSESEQTQTSSAEEPTETEAQTQEPAAQ.

This sequence belongs to the PrsA family.

It is found in the cell membrane. It catalyses the reaction [protein]-peptidylproline (omega=180) = [protein]-peptidylproline (omega=0). In terms of biological role, plays a major role in protein secretion by helping the post-translocational extracellular folding of several secreted proteins. This Streptococcus pyogenes serotype M6 (strain ATCC BAA-946 / MGAS10394) protein is Foldase protein PrsA 1.